Here is a 245-residue protein sequence, read N- to C-terminus: Alpha carbonic anhydrase 2 (245 aa).

Residues 1–23 (MDKISIRCFIFLVLTSFVTTVSC) form the signal peptide. The Alpha-carbonic anhydrase domain occupies 37–245 (HEFSYEWNQE…THRYFLLFFT (209 aa)). Residues Cys-62 and Cys-222 are joined by a disulfide bond. An N-linked (GlcNAc...) asparagine glycan is attached at Asn-95. His-103 functions as the Proton acceptor in the catalytic mechanism. Asn-120 is a glycosylation site (N-linked (GlcNAc...) asparagine). 3 residues coordinate Zn(2+): His-130, His-132, and His-149. Asn-156 carries an N-linked (GlcNAc...) asparagine glycan. 218–219 (TT) provides a ligand contact to substrate.

This sequence belongs to the alpha-class carbonic anhydrase family. It depends on Zn(2+) as a cofactor. In terms of processing, N-glycosylated. As to expression, expressed in stems and roots.

The protein resides in the plastid. It is found in the chloroplast stroma. The catalysed reaction is hydrogencarbonate + H(+) = CO2 + H2O. Reversible hydration of carbon dioxide. In Arabidopsis thaliana (Mouse-ear cress), this protein is Alpha carbonic anhydrase 2 (ACA2).